We begin with the raw amino-acid sequence, 390 residues long: MRSMKPPGFSSDLMDEHSVDLLNGSILAAENPSKREVAQDVPGFERKPTKVRKPRVKWTEKETNDLLRGCQIHGVGNWKKILLDERFHFTNRSPNDLKDRFRTILPEDYKKFYPNAKTHMGRPQKIPHTVGLSKSTRKERKQFTPEEDERLLEGFFLHGPCWTRISKDANLGLQNRRSTDLRDRFRNAFPERYAAAGFKLKNNPGNRSKYYQNNMVNDATTPNDSSTTEAAAAAVAAVAAVAASNPNASPQQTTEQPASDELLDWPHHNLPSQFFTSQRNPNYSTDSFLLGQSLSDPFNHTLQSFHPYESLFSAGQPPSLPISPSTSQNSVQPFPFSIQQPPLHLEPPLSSNTLNSSTLPQPNSTDFNTFPPLPSTPRISSEDIPWDNRG.

The tract at residues 30 to 57 is disordered; sequence ENPSKREVAQDVPGFERKPTKVRKPRVK. Residues 32-48 are compositionally biased toward basic and acidic residues; it reads PSKREVAQDVPGFERKP. HTH myb-type domains lie at 50–109 and 135–193; these read KVRK…PEDY and STRK…PERY. The H-T-H motif DNA-binding region spans 78–105; that stretch reads WKKILLDERFHFTNRSPNDLKDRFRTIL. Positions 115 to 143 are disordered; the sequence is NAKTHMGRPQKIPHTVGLSKSTRKERKQF. Residues 162 to 189 constitute a DNA-binding region (H-T-H motif); it reads WTRISKDANLGLQNRRSTDLRDRFRNAF. 2 stretches are compositionally biased toward polar residues: residues 244–257 and 322–340; these read SNPNASPQQTTEQP and ISPSTSQNSVQPFPFSIQQ. Disordered regions lie at residues 244–278 and 316–390; these read SNPNASPQQTTEQPASDELLDWPHHNLPSQFFTSQ and QPPS…DNRG. A compositionally biased stretch (low complexity) spans 347–360; that stretch reads PPLSSNTLNSSTLP.

The protein localises to the nucleus. Functionally, general transcription factor with prominent roles in controlling histone levels and stability. Binds and regulates the activities of many promoters, including those controlling the expression of all four types of canonical histones. Is also involved in the centromeric loading of cnp1 and maintenance of centromere identity. Moreover, regulates the expression of cdc2, a protease capable of histone clipping. This is Telobox protein 1 from Schizosaccharomyces pombe (strain 972 / ATCC 24843) (Fission yeast).